Consider the following 254-residue polypeptide: Coenzyme F420:L-glutamate ligase (254 aa).

Residues 11–14, 40–41, and Lys-45 contribute to the GTP site; these read IPLI and ST. Residue Asp-109 coordinates a divalent metal cation. Asn-112 provides a ligand contact to GTP. Positions 150, 151, and 208 each coordinate a divalent metal cation. A GTP-binding site is contributed by 206 to 213; sequence MGEGAGGI.

The protein belongs to the CofE family. Homodimer. The cofactor is Mg(2+). Requires Mn(2+) as cofactor. K(+) serves as cofactor.

It carries out the reaction oxidized coenzyme F420-0 + GTP + L-glutamate = oxidized coenzyme F420-1 + GDP + phosphate + H(+). The enzyme catalyses oxidized coenzyme F420-1 + GTP + L-glutamate = oxidized coenzyme F420-2 + GDP + phosphate + H(+). It functions in the pathway cofactor biosynthesis; coenzyme F420 biosynthesis. Its function is as follows. Catalyzes the GTP-dependent successive addition of two or more gamma-linked L-glutamates to the L-lactyl phosphodiester of 7,8-didemethyl-8-hydroxy-5-deazariboflavin (F420-0) to form coenzyme F420-0-glutamyl-glutamate (F420-2) or polyglutamated F420 derivatives. This Methanosarcina acetivorans (strain ATCC 35395 / DSM 2834 / JCM 12185 / C2A) protein is Coenzyme F420:L-glutamate ligase.